The following is a 100-amino-acid chain: Large ribosomal subunit protein uL23 (100 aa).

This sequence belongs to the universal ribosomal protein uL23 family. As to quaternary structure, part of the 50S ribosomal subunit. Contacts protein L29, and trigger factor when it is bound to the ribosome.

One of the early assembly proteins it binds 23S rRNA. One of the proteins that surrounds the polypeptide exit tunnel on the outside of the ribosome. Forms the main docking site for trigger factor binding to the ribosome. The chain is Large ribosomal subunit protein uL23 from Photobacterium profundum (strain SS9).